A 1606-amino-acid chain; its full sequence is Phosphatidylinositol 3,4,5-trisphosphate-dependent Rac exchanger 2 protein (1606 aa).

Residues 23–214 (LRVCVLSELQ…KAVCSNINEA (192 aa)) form the DH domain. Residues 245–361 (EMLMCGVLLK…WFEAILKERE (117 aa)) form the PH domain. DEP domains follow at residues 390-464 (CRQG…RFRY) and 491-566 (SLFT…FFSD). PDZ domains lie at 592–671 (KSLL…VLVS) and 677–754 (TVKI…QDSI). The interval 1581–1606 (GVRDRTPQSAPRLYKLCEPPPPAGEE) is disordered.

Interacts with RAC1. As to expression, isoform 1 is highly expressed in skeletal muscle, heart and placenta, absent from peripheral blood leukocytes. Isoform 2 is expressed in skeletal muscle, kidney, small intestine, and placenta. Isoform 3 is expressed in the heart.

Its function is as follows. Functions as a RAC1 guanine nucleotide exchange factor (GEF), activating Rac proteins by exchanging bound GDP for free GTP. Its activity is synergistically activated by phosphatidylinositol 3,4,5-trisphosphate and the beta gamma subunits of heterotrimeric G protein. Mediates the activation of RAC1 in a PI3K-dependent manner. May be an important mediator of Rac signaling, acting directly downstream of both G protein-coupled receptors and phosphoinositide 3-kinase. The chain is Phosphatidylinositol 3,4,5-trisphosphate-dependent Rac exchanger 2 protein from Homo sapiens (Human).